Here is a 138-residue protein sequence, read N- to C-terminus: MPASATAAWHCPPLCLPPLPASAPTSPPNPATRPAPGPGRRARCPQSAHPAPTRGALTFWAPGSWPRVLLVPRSPGPVLRAPRLPHPAARARRRAWHGARLPGSPARAGRTFQRGLVSNSWAHAIFLPRPPNVLELQV.

The span at 22 to 37 (SAPTSPPNPATRPAPG) shows a compositional bias: pro residues. 2 disordered regions span residues 22–55 (SAPTSPPNPATRPAPGPGRRARCPQSAHPAPTRG) and 81–107 (APRLPHPAARARRRAWHGARLPGSPAR).

In Homo sapiens (Human), this protein is Proline-rich protein 34 (PRR34).